The sequence spans 329 residues: uncharacterized protein (329 aa).

A disordered region spans residues S284 to S303.

This is an uncharacterized protein from Methanocaldococcus jannaschii (strain ATCC 43067 / DSM 2661 / JAL-1 / JCM 10045 / NBRC 100440) (Methanococcus jannaschii).